Reading from the N-terminus, the 276-residue chain is Putative metal-binding protein CT_415 (276 aa).

Residues 1–18 (MRLLFLLLFSLGITCSYG) form the signal peptide. Positions 59, 121, 185, and 256 each coordinate a divalent metal cation.

This sequence belongs to the bacterial solute-binding protein 9 family.

It localises to the periplasm. Its function is as follows. Part of an ATP-binding cassette (ABC) transport system involved in metal import. Binds a metal with high affinity and specificity and delivers it to the membrane permease for translocation into the cytoplasm. This is Putative metal-binding protein CT_415 from Chlamydia trachomatis serovar D (strain ATCC VR-885 / DSM 19411 / UW-3/Cx).